We begin with the raw amino-acid sequence, 81 residues long: Thrombin-like enzyme collinein-3 (81 aa).

Asp4 is a catalytic residue. Cys51 and Cys68 are oxidised to a cystine.

As to quaternary structure, monomer. In terms of tissue distribution, expressed by the vanom gland.

Its subcellular location is the secreted. Functionally, thrombin-like snake venom serine protease. This Crotalus durissus collilineatus (Brazilian rattlesnake) protein is Thrombin-like enzyme collinein-3.